Consider the following 706-residue polypeptide: MAKEKYVIQAELETKGVLSNAREAQREINNIGRLAKETNKNAQITGSVTMKDKGIKETQRALNLAKQNVDNLTKALANAKMSGATQKQVQALESQLVKAQTQATRLSTELAKVGSEKGTGLSGAVDKMKSAGGSLLGTFSKVGNVVSGISSAIGLVSGGISKAVDLTSGFANTLMDTYDKQIQAQKTLSTTLSDGAKGYEQFNGHIDKGNSLLKSQKTDLNELGATISSYMKVSGDEAFKTVNAINAVGDSLGLGMDTQKQFTYGLAQALGSGTLHAQDFNQMMQSALGAQFRDMLIQAANEMQNVGMTAEQLPDALKKGKVEADLLANTFGDNWASKMAKAQTSLKGIEVSTGGVKRMLKDGQLSVQDFTNVFGDGFTSSLLNAMNTTSDGAVTMENFKDKMEDGVFSTEVMNRAIELFQQKGEKLASSGPSTWAQIREMISNGFNTSALDGFRKGLGDTGLDMSSMGNNATEMSSIVGSKLGQMAGQAVGALTKIIDKNKDGKVSNEEMEGAVNDAKDAVTNFFNKINFTSIQGFLGKIGNAIDELVRFYNWANDAYGAVQNLLSASRQVGGNTGLIGKALGFRKNSTWGDAFSDFHWLTSNIDPLGLKENQGLGQKLLGSRNGQIPLDLQFFAGGREAINKAVDAVQPYARASKGTTATSSIGTQDNSKQDIKIYVQSSADGQRIAKEIYNKLERNGVKLNKR.

A coiled-coil region spans residues 9–113 (QAELETKGVL…TRLSTELAKV (105 aa)). 3 consecutive EF-hand domains span residues 271 to 290 (GSGT…ALGA), 361 to 380 (KDGQ…GFTS), and 496 to 521 (KIID…AKDA). Ca(2+)-binding residues include aspartate 499, asparagine 501, aspartate 503, lysine 505, and glutamate 510.

It belongs to the Mulikevirus tape measure protein family.

Functionally, serves as a base for tail tube protein polymerization and acts as a template for tail length determination. This Lactococcus phage c2 protein is Probable tape measure protein.